Here is a 293-residue protein sequence, read N- to C-terminus: Phosphate-binding protein PstS 2 (293 aa).

A signal peptide spans 1 to 23; the sequence is MKKHKMLSLLAVSGLMGIGILAG. Cys24 is lipidated: N-palmitoyl cysteine. Residue Cys24 is the site of S-diacylglycerol cysteine attachment.

The protein belongs to the PstS family. As to quaternary structure, the complex is composed of two ATP-binding proteins (PstB), two transmembrane proteins (PstC and PstA) and a solute-binding protein (PstS).

Its subcellular location is the cell membrane. Part of the ABC transporter complex PstSACB involved in phosphate import. This is Phosphate-binding protein PstS 2 (pstS2) from Streptococcus agalactiae serotype III (strain NEM316).